A 342-amino-acid polypeptide reads, in one-letter code: Ketol-acid reductoisomerase (NADP(+)) (342 aa).

The KARI N-terminal Rossmann domain occupies 2-182 (AEMFYDDDAD…GGLRAGGIKT (181 aa)). NADP(+) is bound by residues 25–28 (FGSQ), lysine 48, serine 51, serine 53, and 83–86 (DHLQ). Histidine 108 is a catalytic residue. Glycine 134 lines the NADP(+) pocket. The region spanning 183–328 (TFTEETETDL…RELRKLMAWV (146 aa)) is the KARI C-terminal knotted domain. Mg(2+) contacts are provided by aspartate 191, glutamate 195, glutamate 227, and glutamate 231. Serine 252 is a binding site for substrate.

It belongs to the ketol-acid reductoisomerase family. It depends on Mg(2+) as a cofactor.

The catalysed reaction is (2R)-2,3-dihydroxy-3-methylbutanoate + NADP(+) = (2S)-2-acetolactate + NADPH + H(+). The enzyme catalyses (2R,3R)-2,3-dihydroxy-3-methylpentanoate + NADP(+) = (S)-2-ethyl-2-hydroxy-3-oxobutanoate + NADPH + H(+). It participates in amino-acid biosynthesis; L-isoleucine biosynthesis; L-isoleucine from 2-oxobutanoate: step 2/4. The protein operates within amino-acid biosynthesis; L-valine biosynthesis; L-valine from pyruvate: step 2/4. Involved in the biosynthesis of branched-chain amino acids (BCAA). Catalyzes an alkyl-migration followed by a ketol-acid reduction of (S)-2-acetolactate (S2AL) to yield (R)-2,3-dihydroxy-isovalerate. In the isomerase reaction, S2AL is rearranged via a Mg-dependent methyl migration to produce 3-hydroxy-3-methyl-2-ketobutyrate (HMKB). In the reductase reaction, this 2-ketoacid undergoes a metal-dependent reduction by NADPH to yield (R)-2,3-dihydroxy-isovalerate. The polypeptide is Ketol-acid reductoisomerase (NADP(+)) (Kineococcus radiotolerans (strain ATCC BAA-149 / DSM 14245 / SRS30216)).